A 301-amino-acid chain; its full sequence is 3-dehydroquinate dehydratase (301 aa).

The segment at 1 to 221 is 3-dehydroquinate dehydratase; sequence MLQYGVLICG…YYAALLALGI (221 aa). 3-dehydroquinate is bound by residues 32–34 and Arg-63; that span reads ELR. His-119 functions as the Proton donor/acceptor in the catalytic mechanism. The Schiff-base intermediate with substrate role is filled by Lys-145. Residues Arg-183, Thr-202, and Gln-206 each contribute to the 3-dehydroquinate site. One can recognise a Chorismate mutase domain in the interval 222–301; the sequence is TPSGGGLPAL…QMCKAVQLVA (80 aa).

The protein belongs to the type-I 3-dehydroquinase family. Homodimer.

It catalyses the reaction 3-dehydroquinate = 3-dehydroshikimate + H2O. It participates in metabolic intermediate biosynthesis; chorismate biosynthesis; chorismate from D-erythrose 4-phosphate and phosphoenolpyruvate: step 3/7. Involved in the third step of the chorismate pathway, which leads to the biosynthesis of aromatic amino acids. Catalyzes the cis-dehydration of 3-dehydroquinate (DHQ) and introduces the first double bond of the aromatic ring to yield 3-dehydroshikimate. The protein is 3-dehydroquinate dehydratase of Pyrobaculum aerophilum (strain ATCC 51768 / DSM 7523 / JCM 9630 / CIP 104966 / NBRC 100827 / IM2).